The sequence spans 383 residues: Thioredoxin reductase 2 (383 aa).

FAD contacts are provided by residues 66-69, 87-88, 95-100, asparagine 109, valine 142, cysteine 200, aspartate 345, and 352-354; these read SGPA, FE, IAPGGQ, and RQA. A disulfide bridge connects residues cysteine 197 and cysteine 200.

Belongs to the class-II pyridine nucleotide-disulfide oxidoreductase family. Homodimer. It depends on FAD as a cofactor.

It localises to the cytoplasm. It is found in the mitochondrion matrix. The catalysed reaction is [thioredoxin]-dithiol + NADP(+) = [thioredoxin]-disulfide + NADPH + H(+). In terms of biological role, possesses thioredoxin-disulfide reductase activity towards thioredoxins O1, O2 and F3. This chain is Thioredoxin reductase 2 (NTR2), found in Arabidopsis thaliana (Mouse-ear cress).